A 370-amino-acid polypeptide reads, in one-letter code: Doublesex- and mab-3-related transcription factor C2 (370 aa).

Residues 1 to 38 (MDPSETAALHHCSADSSPADEARVPQSTELIPRRPVSR) form a disordered region. The segment at residues 42-89 (CARCRNHGVTAHLKGHKRLCLFQACECHKCVLILERRRVMAAQVALRR) is a DNA-binding region (DM). The interval 334–356 (APPGGRGFQPVGPPLRPSPGSSV) is disordered.

The protein belongs to the DMRT family. In terms of tissue distribution, expressed in testis. Highly expressed in ovary.

It localises to the nucleus. May be involved in sexual development. This is Doublesex- and mab-3-related transcription factor C2 (Dmrtc2) from Mus musculus (Mouse).